The primary structure comprises 595 residues: MEPEPAAQKQPRPRRRSRRVSMLSEEPAAGLPADTPGPAANERCSLRRGSSFTFLTPGPHWDFTLKRKRREKDDDAVSLSSLDLKEPSNKRVRPLARVTSLANLISPVRNGAVRRFGQTIQSFTLRGDHRSPASAQKSFSRSTVPTPTKRRSSALWSEMLDINMKESLTTREIKRQEAIYELSRGEQDLIEDLKLARKAYHDPMLKLSIMSEEELTHIFGDLDAYIPLHEDLLARIGEATKPDGTVEQIGHILVNWLPGLNAYRGYCSNQLAAKALLDQKKQDPRVQDFLQRCLESPFSRKLDLWSFLDIPRSRLVKYPLLLKEILRHTPKDHRDVQLLEEAILIIQGVLSDINLKKGESECQYYINKLEYLDEKQKDPRIEASKVLLCHGELKNKSGHKLYIFLFQDILVLTRPVTRNERHLYQVYRQPIPVQELVLEDLQDGDVRMGGSFRGAFGNSDKAKNIFRVRFQDPSPGHSHTLQANDVFHKQQWFNCIRAAIAPFQRAASPLELQGLPDLHEECEENNPSAGNLRAQRRSCVVPGVMQIDEESALDCGSSVQTVEDTRNMKAQRPQPGLRRARDKAQSGGKKKETLV.

Met1 bears the N-acetylmethionine mark. Positions 1-42 are disordered; that stretch reads MEPEPAAQKQPRPRRRSRRVSMLSEEPAAGLPADTPGPAANE. A necessary for nuclear localization region spans residues 1–74; that stretch reads MEPEPAAQKQ…LKRKRREKDD (74 aa). The Nuclear localization signal signature appears at 12 to 19; it reads RPRRRSRR. Ser21 is modified (phosphoserine). Residues 66 to 72 carry the Nuclear localization signal motif; that stretch reads KRKRREK. Residues Ser100, Ser106, and Ser122 each carry the phosphoserine modification. Residues 127–151 form a disordered region; it reads GDHRSPASAQKSFSRSTVPTPTKRR. Residues 133–146 show a composition bias toward polar residues; the sequence is ASAQKSFSRSTVPT. The 183-residue stretch at 174–356 folds into the DH domain; that stretch reads KRQEAIYELS…QGVLSDINLK (183 aa). A PH domain is found at 386–501; the sequence is VLLCHGELKN…WFNCIRAAIA (116 aa). Ser508 carries the phosphoserine modification. The segment at 555 to 595 is disordered; that stretch reads CGSSVQTVEDTRNMKAQRPQPGLRRARDKAQSGGKKKETLV.

In terms of assembly, interacts with RHOA in its GTP- and GDP-bound states, and with CDC42 in its GTP-bound state. Interacts with the PDZ 1 domain of BAIAP1.

The protein resides in the cytoplasm. Its subcellular location is the nucleus. Acts as a guanine nucleotide exchange factor (GEF) for RhoA GTPase. May be involved in activation of the SAPK/JNK pathway. Stimulates genotoxic stress-induced RHOB activity in breast cancer cells leading to their cell death. This chain is Neuroepithelial cell-transforming gene 1 protein (Net1), found in Mus musculus (Mouse).